A 235-amino-acid polypeptide reads, in one-letter code: Large ribosomal subunit protein uL1 (235 aa).

The protein belongs to the universal ribosomal protein uL1 family. Part of the 50S ribosomal subunit.

Functionally, binds directly to 23S rRNA. The L1 stalk is quite mobile in the ribosome, and is involved in E site tRNA release. In terms of biological role, protein L1 is also a translational repressor protein, it controls the translation of the L11 operon by binding to its mRNA. The polypeptide is Large ribosomal subunit protein uL1 (Synechococcus sp. (strain CC9605)).